A 171-amino-acid chain; its full sequence is SWR1 complex subunit 6 (171 aa).

Residues Asp63–Lys87 are disordered. The segment covering Lys73 to Gln85 has biased composition (basic residues). Zn(2+)-binding residues include Cys134, Cys137, Cys145, Cys148, Cys153, Cys157, His161, and Cys166. An HIT-type zinc finger spans residues Cys134 to Cys166.

It belongs to the ZNHIT1 family. In terms of assembly, homodimer. Component of the SWR1 chromatin-remodeling complex composed of at least ARP6/ESD1/SUF3, PIE1, SWC6, SWC2 and H2AZs (HTA8, HTA9, HTA11). Interacts directly with ARP6, PIE1 and SWC2. Interacts with FLX and SUF4, two component of the transcription activator complex FRI-C, and with ASHH2 and TAF14. In terms of tissue distribution, expressed in root, lateral root primordia, shoot apex, leaves, stems, inflorescences, flowers, axillary buds, developing siliques and premature seeds.

The protein resides in the nucleus speckle. The protein localises to the nucleus. Component of the SWR1 complex which mediates the ATP-dependent exchange of histone H2A for the H2A variant H2A.F/Z leading to transcriptional regulation of selected genes (e.g. FLC) by chromatin remodeling. Coodinates SWR1-C, FRI-C (FLC transcription activator complex), histone methyltransferase and general transcription factors. Represses flowering by positively regulating FLC and MAF4. Binds to the promoter region of FLC chromatin. The sequence is that of SWR1 complex subunit 6 (SWC6) from Arabidopsis thaliana (Mouse-ear cress).